The primary structure comprises 54 residues: Ovomucoid (54 aa).

Positions 4–54 constitute a Kazal-like domain; it reads VDCSDYPKPVCSLEYMPLCGSDSKTYSNKCDFCNAFVDSNGTLSLSHFGKC. Disulfide bonds link Cys-6-Cys-36, Cys-14-Cys-33, and Cys-22-Cys-54. A glycan (N-linked (GlcNAc...) asparagine) is linked at Asn-43.

It is found in the secreted. This chain is Ovomucoid, found in Circus aeruginosus (Western marsh harrier).